We begin with the raw amino-acid sequence, 210 residues long: Prolactin (210 aa).

Positions 1–23 are cleaved as a signal peptide; that stretch reads MAEGSRLYFAVTVLMCAFVSING. Cystine bridges form between C69–C183 and C200–C210.

The protein belongs to the somatotropin/prolactin family. As to expression, pituitary gland.

Its subcellular location is the secreted. The sequence is that of Prolactin (prl) from Hypophthalmichthys nobilis (Bighead carp).